Reading from the N-terminus, the 529-residue chain is Bifunctional purine biosynthesis protein PurH (529 aa).

An MGS-like domain is found at 2–149 (TDLVPLRRAL…KNHSFVTVLT (148 aa)).

The protein belongs to the PurH family.

It carries out the reaction (6R)-10-formyltetrahydrofolate + 5-amino-1-(5-phospho-beta-D-ribosyl)imidazole-4-carboxamide = 5-formamido-1-(5-phospho-D-ribosyl)imidazole-4-carboxamide + (6S)-5,6,7,8-tetrahydrofolate. The catalysed reaction is IMP + H2O = 5-formamido-1-(5-phospho-D-ribosyl)imidazole-4-carboxamide. It participates in purine metabolism; IMP biosynthesis via de novo pathway; 5-formamido-1-(5-phospho-D-ribosyl)imidazole-4-carboxamide from 5-amino-1-(5-phospho-D-ribosyl)imidazole-4-carboxamide (10-formyl THF route): step 1/1. Its pathway is purine metabolism; IMP biosynthesis via de novo pathway; IMP from 5-formamido-1-(5-phospho-D-ribosyl)imidazole-4-carboxamide: step 1/1. The protein is Bifunctional purine biosynthesis protein PurH of Dinoroseobacter shibae (strain DSM 16493 / NCIMB 14021 / DFL 12).